The following is a 381-amino-acid chain: 3-isopropylmalate dehydrogenase (381 aa).

Residues arginine 104, arginine 114, arginine 142, and aspartate 232 each contribute to the substrate site. Residues aspartate 232, aspartate 256, and aspartate 260 each coordinate Mg(2+). 290-302 contributes to the NAD(+) binding site; that stretch reads GSAPDIAGQDKAN.

The protein belongs to the isocitrate and isopropylmalate dehydrogenases family. LeuB type 1 subfamily. As to quaternary structure, homodimer. It depends on Mg(2+) as a cofactor. Mn(2+) is required as a cofactor.

It is found in the cytoplasm. It catalyses the reaction (2R,3S)-3-isopropylmalate + NAD(+) = 4-methyl-2-oxopentanoate + CO2 + NADH. The protein operates within amino-acid biosynthesis; L-leucine biosynthesis; L-leucine from 3-methyl-2-oxobutanoate: step 3/4. Catalyzes the oxidation of 3-carboxy-2-hydroxy-4-methylpentanoate (3-isopropylmalate) to 3-carboxy-4-methyl-2-oxopentanoate. The product decarboxylates to 4-methyl-2 oxopentanoate. The polypeptide is 3-isopropylmalate dehydrogenase (Synechococcus sp. (strain JA-3-3Ab) (Cyanobacteria bacterium Yellowstone A-Prime)).